The chain runs to 127 residues: Ribonuclease P protein component (127 aa).

The interval 99–127 (ALSASLRQQLRDGIDRSARRQEPAAERQR) is disordered. Over residues 107-127 (QLRDGIDRSARRQEPAAERQR) the composition is skewed to basic and acidic residues.

It belongs to the RnpA family. Consists of a catalytic RNA component (M1 or rnpB) and a protein subunit.

It carries out the reaction Endonucleolytic cleavage of RNA, removing 5'-extranucleotides from tRNA precursor.. In terms of biological role, RNaseP catalyzes the removal of the 5'-leader sequence from pre-tRNA to produce the mature 5'-terminus. It can also cleave other RNA substrates such as 4.5S RNA. The protein component plays an auxiliary but essential role in vivo by binding to the 5'-leader sequence and broadening the substrate specificity of the ribozyme. The protein is Ribonuclease P protein component of Mycobacteroides abscessus (strain ATCC 19977 / DSM 44196 / CCUG 20993 / CIP 104536 / JCM 13569 / NCTC 13031 / TMC 1543 / L948) (Mycobacterium abscessus).